The chain runs to 347 residues: Selenide, water dikinase (347 aa).

Residue Cys17 is part of the active site. ATP is bound by residues Lys20 and 48–50 (TRD). Residue Asp51 participates in Mg(2+) binding. Residues Asp68, Asp91, and 139 to 141 (GHS) contribute to the ATP site. Asp91 serves as a coordination point for Mg(2+). Residue Asp227 participates in Mg(2+) binding.

It belongs to the selenophosphate synthase 1 family. Class I subfamily. As to quaternary structure, homodimer. The cofactor is Mg(2+).

It carries out the reaction hydrogenselenide + ATP + H2O = selenophosphate + AMP + phosphate + 2 H(+). Functionally, synthesizes selenophosphate from selenide and ATP. This is Selenide, water dikinase from Escherichia coli O157:H7.